Reading from the N-terminus, the 161-residue chain is Anaerobic nitrite reductase Hb2 (161 aa).

Residues 8 to 157 (GFSEEQEALV…LVDAIKSEMK (150 aa)) enclose the Globin domain. Residues 41-45 (EIAPS) carry the Homodimerization motif. Heme b is bound by residues Ser-51, Lys-65, His-69, Lys-99, Thr-103, and His-104. The Homodimerization motif lies at 111–123 (NEHFEVTKFALLE).

Belongs to the plant globin family. As to quaternary structure, homodimer. Heme b is required as a cofactor. In terms of tissue distribution, predominantly expressed in roots, cotyledons, stems and nodules (confined to some cells associated with the nitrogen-fixing Bradyrhizobium symbiont), and, to a lower extent, in flowers, young leaves, pods and seeds.

The protein localises to the cytoplasm. It localises to the nucleus. The catalysed reaction is Fe(III)-heme b-[protein] + nitric oxide + H2O = Fe(II)-heme b-[protein] + nitrite + 2 H(+). Phytoglobin that reduces nitrite to nitric oxide (NO) under anoxic conditions (e.g. during flooding or in waterlogged soil) and upon root nodulation. Required for general plant development and during nodulation, especially for the onset of symbiosis. Monitors nitric oxide (NO) levels during early phase of the nitrogen-fixing symbiosis and buffers oxygen in functioning nodules. May not function as an oxygen storage or transport protein. Has an unusually high affinity for O(2) through a hexacoordinate heme iron because of a very low dissociation constant. Involved in water stress tolerance. This is Anaerobic nitrite reductase Hb2 from Glycine max (Soybean).